The primary structure comprises 54 residues: Low temperature-induced protein lt101.2 (54 aa).

2 helical membrane-spanning segments follow: residues 2–22 and 34–54; these read ASAT…GVFL and LLLT…VLVA.

It belongs to the UPF0057 (PMP3) family.

It localises to the membrane. This is Low temperature-induced protein lt101.2 (LT101.2) from Hordeum vulgare (Barley).